Reading from the N-terminus, the 486-residue chain is Glutamyl-tRNA(Gln) amidotransferase subunit A (486 aa).

Active-site charge relay system residues include Lys-78 and Ser-153. Ser-177 acts as the Acyl-ester intermediate in catalysis.

This sequence belongs to the amidase family. GatA subfamily. In terms of assembly, heterotrimer of A, B and C subunits.

It catalyses the reaction L-glutamyl-tRNA(Gln) + L-glutamine + ATP + H2O = L-glutaminyl-tRNA(Gln) + L-glutamate + ADP + phosphate + H(+). Allows the formation of correctly charged Gln-tRNA(Gln) through the transamidation of misacylated Glu-tRNA(Gln) in organisms which lack glutaminyl-tRNA synthetase. The reaction takes place in the presence of glutamine and ATP through an activated gamma-phospho-Glu-tRNA(Gln). The polypeptide is Glutamyl-tRNA(Gln) amidotransferase subunit A (Ruminiclostridium cellulolyticum (strain ATCC 35319 / DSM 5812 / JCM 6584 / H10) (Clostridium cellulolyticum)).